The chain runs to 286 residues: Flagellin FlaB2 (286 aa).

It belongs to the bacterial flagellin family. As to quaternary structure, the flagellum consists of an outer layer composed of repeating units of FlaA around a core that contains several antigenically related polypeptides. Interacts with FliW; a synthetic peptide of FlaB1 (residues 229-247) partially blocks binding of this protein to FliW.

Its subcellular location is the periplasmic flagellum. It localises to the periplasm. Functionally, component of the core of the flagella. In Treponema pallidum (strain Nichols), this protein is Flagellin FlaB2.